The chain runs to 481 residues: Glutamyl-tRNA(Gln) amidotransferase subunit A (481 aa).

Residues Lys76 and Ser151 each act as charge relay system in the active site. Ser175 serves as the catalytic Acyl-ester intermediate.

This sequence belongs to the amidase family. GatA subfamily. As to quaternary structure, heterotrimer of A, B and C subunits.

It catalyses the reaction L-glutamyl-tRNA(Gln) + L-glutamine + ATP + H2O = L-glutaminyl-tRNA(Gln) + L-glutamate + ADP + phosphate + H(+). Allows the formation of correctly charged Gln-tRNA(Gln) through the transamidation of misacylated Glu-tRNA(Gln) in organisms which lack glutaminyl-tRNA synthetase. The reaction takes place in the presence of glutamine and ATP through an activated gamma-phospho-Glu-tRNA(Gln). The chain is Glutamyl-tRNA(Gln) amidotransferase subunit A from Neisseria meningitidis serogroup A / serotype 4A (strain DSM 15465 / Z2491).